Consider the following 366-residue polypeptide: Galactoside alpha-(1,2)-fucosyltransferase 1 (366 aa).

Topologically, residues Met-1–His-8 are cytoplasmic. The chain crosses the membrane as a helical; Signal-anchor for type II membrane protein span at residues Leu-9–Phe-25. Topologically, residues Leu-26 to Pro-366 are lumenal. Asn-66, Asn-302, and Asn-328 each carry an N-linked (GlcNAc...) asparagine glycan.

Belongs to the glycosyltransferase 11 family.

The protein resides in the golgi apparatus. Its subcellular location is the golgi stack membrane. It catalyses the reaction a beta-D-galactosyl-(1-&gt;4)-N-acetyl-beta-D-glucosaminyl derivative + GDP-beta-L-fucose = an alpha-L-Fuc-(1-&gt;2)-beta-D-Gal-(1-&gt;4)-beta-D-GlcNAc derivative + GDP + H(+). The enzyme catalyses a ganglioside GA1 + GDP-beta-L-fucose = a ganglioside Fuc-GA1 + GDP + H(+). It carries out the reaction a beta-D-Gal-(1-&gt;3)-beta-D-GlcNAc-(1-&gt;3)-beta-D-Gal-(1-&gt;4)-beta-D-Glc-(1&lt;-&gt;1')-Cer(d18:1(4E)) + GDP-beta-L-fucose = alpha-L-fucosyl-(1-&gt;2)- beta-D-galactosyl-(1-&gt;3)-N-acetyl-beta-D-glucosaminyl-(1-&gt;3)-beta-D-galactosyl-(1-&gt;4)-beta-D-glucosyl-(1&lt;-&gt;1')-N-acylsphing-4-enine + GDP + H(+). The catalysed reaction is a neolactoside nLc4Cer(d18:1(4E)) + GDP-beta-L-fucose = a neolactoside IV(2)-alpha-Fuc-nLc4Cer(d18:1(4E)) + GDP + H(+). It catalyses the reaction a ganglioside GM1 + GDP-beta-L-fucose = a ganglioside Fuc-GM1 + GDP + H(+). The enzyme catalyses beta-D-galactosyl-(1-&gt;3)-N-acetyl-D-galactosamine + GDP-beta-L-fucose = alpha-L-fucosyl-(1-&gt;2)-beta-D-galactosyl-(1-&gt;3)-N-acetyl-D-galactosamine + GDP + H(+). The protein operates within protein modification; protein glycosylation. Functionally, catalyzes the transfer of L-fucose, from a guanosine diphosphate-beta-L-fucose, to the terminal galactose residue of glycoconjugates through an alpha(1,2) linkage leading to H antigen synthesis that is an intermediate substrate in the synthesis of ABO blood group antigens. H antigen is essential for maturation of the glomerular layer of the main olfactory bulb, in cell migration and early cell-cell contacts during tumor associated angiogenesis. Preferentially fucosylates soluble lactose and to a lesser extent fucosylates glycolipids gangliosides GA1 and GM1a. The protein is Galactoside alpha-(1,2)-fucosyltransferase 1 of Ateles belzebuth (White-bellied spider monkey).